An 87-amino-acid polypeptide reads, in one-letter code: uncharacterized protein (87 aa).

Residues 44–64 (DALYLAGSTIFTIVTTLVAWF) traverse the membrane as a helical segment.

Belongs to the SPP1 holin family.

The protein localises to the membrane. This is an uncharacterized protein from Bacillus licheniformis.